Consider the following 98-residue polypeptide: DNA-binding protein Fis (98 aa).

Residues 74–93 constitute a DNA-binding region (H-T-H motif); sequence QTKAANMMGINRGTLRKKLK.

The protein belongs to the transcriptional regulatory Fis family. Homodimer.

Its function is as follows. Activates ribosomal RNA transcription. Plays a direct role in upstream activation of rRNA promoters. This is DNA-binding protein Fis from Aliivibrio fischeri (strain ATCC 700601 / ES114) (Vibrio fischeri).